The chain runs to 253 residues: Chitooligosaccharide deacetylase (253 aa).

Mg(2+) contacts are provided by histidine 61 and histidine 126.

Belongs to the YdjC deacetylase family. ChbG subfamily. As to quaternary structure, homodimer. Mg(2+) is required as a cofactor.

The protein resides in the cytoplasm. It carries out the reaction N,N'-diacetylchitobiose + H2O = N-acetyl-beta-D-glucosaminyl-(1-&gt;4)-D-glucosamine + acetate. The catalysed reaction is diacetylchitobiose-6'-phosphate + H2O = N'-monoacetylchitobiose-6'-phosphate + acetate. The protein operates within glycan degradation; chitin degradation. In terms of biological role, involved in the degradation of chitin. ChbG is essential for growth on the acetylated chitooligosaccharides chitobiose and chitotriose but is dispensable for growth on cellobiose and chitosan dimer, the deacetylated form of chitobiose. Deacetylation of chitobiose-6-P and chitotriose-6-P is necessary for both the activation of the chb promoter by the regulatory protein ChbR and the hydrolysis of phosphorylated beta-glucosides by the phospho-beta-glucosidase ChbF. Catalyzes the removal of only one acetyl group from chitobiose-6-P to yield monoacetylchitobiose-6-P, the inducer of ChbR and the substrate of ChbF. The sequence is that of Chitooligosaccharide deacetylase from Yersinia enterocolitica serotype O:8 / biotype 1B (strain NCTC 13174 / 8081).